A 285-amino-acid chain; its full sequence is 3-methyl-2-oxobutanoate hydroxymethyltransferase 1 (285 aa).

Asp-49 and Asp-88 together coordinate Mg(2+). 3-methyl-2-oxobutanoate is bound by residues 49 to 50 (DS), Asp-88, and Lys-118. Glu-120 is a Mg(2+) binding site. Glu-187 serves as the catalytic Proton acceptor.

It belongs to the PanB family. As to quaternary structure, homodecamer; pentamer of dimers. Requires Mg(2+) as cofactor.

It localises to the cytoplasm. The catalysed reaction is 3-methyl-2-oxobutanoate + (6R)-5,10-methylene-5,6,7,8-tetrahydrofolate + H2O = 2-dehydropantoate + (6S)-5,6,7,8-tetrahydrofolate. It participates in cofactor biosynthesis; (R)-pantothenate biosynthesis; (R)-pantoate from 3-methyl-2-oxobutanoate: step 1/2. Catalyzes the reversible reaction in which hydroxymethyl group from 5,10-methylenetetrahydrofolate is transferred onto alpha-ketoisovalerate to form ketopantoate. This chain is 3-methyl-2-oxobutanoate hydroxymethyltransferase 1, found in Burkholderia lata (strain ATCC 17760 / DSM 23089 / LMG 22485 / NCIMB 9086 / R18194 / 383).